The sequence spans 311 residues: Transmembrane protein 177 (311 aa).

Residues 1–17 (MAGPLWRTAAFVQRHRT) lie on the Mitochondrial matrix side of the membrane. Residues 18-38 (GLLVGSCAGLFGVPISYHLFP) traverse the membrane as a helical segment. The Mitochondrial intermembrane portion of the chain corresponds to 39–166 (DPVVQWLYQY…EVVYLESSTT (128 aa)). Residues 167–187 (AVHALLAPACLAGTWALGVGA) form a helical membrane-spanning segment. Topologically, residues 188-197 (KYTLGLHAGP) are mitochondrial matrix. The chain crosses the membrane as a helical span at residues 198–218 (MNLRAAFSLVAAVAGFVAYAF). At 219–311 (SQDSLTHAVE…WRGMLNPGRS (93 aa)) the chain is on the mitochondrial intermembrane side.

It belongs to the TMEM177 family. In terms of assembly, found in a complex with COX20, COA6, MT-CO2/COX2, COX18, SCO1 and SCO2. Interacts with COX20. Interacts with COX1, MT-CO2/COX2, SCO1 and SCO2 in a COX20-dependent manner.

Its subcellular location is the mitochondrion inner membrane. Functionally, plays a role in the early steps of cytochrome c oxidase subunit II (MT-CO2/COX2) maturation and is required for the stabilization of COX20 and the newly synthesized MT-CO2/COX2 protein. This Homo sapiens (Human) protein is Transmembrane protein 177 (TMEM177).